Here is a 278-residue protein sequence, read N- to C-terminus: Large ribosomal subunit protein uL2 (278 aa).

2 disordered regions span residues 1-58 and 225-278; these read MAIR…GGGH and VMNP…KNKR. Basic residues predominate over residues 37-58; the sequence is LHGRGGRNAHGRITTRHKGGGH. The span at 253–267 shows a compositional bias: basic and acidic residues; it reads PEGRTRKNKASDKLI. A compositionally biased stretch (basic residues) spans 268–278; sequence VRRRRTGKNKR.

This sequence belongs to the universal ribosomal protein uL2 family. As to quaternary structure, part of the 50S ribosomal subunit. Forms a bridge to the 30S subunit in the 70S ribosome.

Functionally, one of the primary rRNA binding proteins. Required for association of the 30S and 50S subunits to form the 70S ribosome, for tRNA binding and peptide bond formation. It has been suggested to have peptidyltransferase activity; this is somewhat controversial. Makes several contacts with the 16S rRNA in the 70S ribosome. The sequence is that of Large ribosomal subunit protein uL2 from Rhodococcus opacus (strain B4).